Here is a 220-residue protein sequence, read N- to C-terminus: MKITAVLFDLDGTIIDTNQLIIKSFVYTVEKHLGYKIGAEEVIPYFGEPLPLTLQRFSKDKWEIMLKTYRDYNEKYHDRYTKIREDVKEVLARLKEEGIKTAVVTSKRRELAKRGLKLFELDKYFDVLVGLEDTEKHKPEPDPVLKALELLKSPREEALMVGDSPYDILSARSAGVRSVAVKWSVLPFELLKKEKPDYFIEDMWQLLKIIKGCDEDEHEQ.

Aspartate 9 serves as the catalytic Nucleophile.

It belongs to the HAD-like hydrolase superfamily. PpaX family. The cofactor is Mg(2+).

It catalyses the reaction diphosphate + H2O = 2 phosphate + H(+). The chain is Putative pyrophosphatase PpaX from Caldanaerobacter subterraneus subsp. tengcongensis (strain DSM 15242 / JCM 11007 / NBRC 100824 / MB4) (Thermoanaerobacter tengcongensis).